We begin with the raw amino-acid sequence, 1347 residues long: DExH-box ATP-dependent RNA helicase DExH11 (1347 aa).

Residues 263–291 (ELEGDDHTAGSESPKAEAEPDAKASISNE) are disordered. Residues 267–284 (DDHTAGSESPKAEAEPDA) are compositionally biased toward basic and acidic residues. Positions 369 to 524 (ICCLEKGESV…WIGRTKQKEI (156 aa)) constitute a Helicase ATP-binding domain. 382-389 (AHTSAGKT) contacts ATP. The short motif at 472–475 (DEVH) is the DEVH box element. The segment at 566 to 625 (SQKKKNSNAVSVAPKQQMGSSAHQDGSKSQKHEAHSRGKQNKHSSVKDVGKSSYSGNSQN) is disordered. Basic and acidic residues predominate over residues 590 to 601 (DGSKSQKHEAHS). The Helicase C-terminal domain occupies 673–838 (DLTSSSEKSE…LTYIMILHLL (166 aa)).

The protein belongs to the DExH box helicase family. SKI2 subfamily. In terms of assembly, component of the cytoplasmic SKI complex, which consists of SKI2, SKI3 and VIP3/SKI8. In terms of tissue distribution, expressed in vascular tissues of leaves and roots of young plants.

The protein resides in the cytoplasm. It catalyses the reaction ATP + H2O = ADP + phosphate + H(+). Its function is as follows. Component of the SKI complex which is thought to be involved in exosome-mediated RNA decay and associates with transcriptionally active genes in a manner dependent on PAF1 complex (PAF1C). Involved in the regulation of potassium deprivation stress response. The chain is DExH-box ATP-dependent RNA helicase DExH11 from Arabidopsis thaliana (Mouse-ear cress).